The chain runs to 239 residues: Vesicle-associated protein 1-3 (239 aa).

The residue at position 1 (methionine 1) is an N-acetylmethionine. Threonine 2 carries the post-translational modification N-acetylthreonine; in Vesicle-associated protein 1-3, N-terminally processed. Residues 2-215 (TTGDLVNIHP…RKETSKKQSG (214 aa)) are Cytoplasmic-facing. The MSP domain maps to 6-127 (LVNIHPTELK…EDFKLRVVYI (122 aa)). 2 positions are modified to phosphoserine: serine 133 and serine 164. Positions 179 to 214 (SMISKLTEEKTSATQQSQKLRLELEMLRKETSKKQS) form a coiled coil. Residues 216 to 236 (GHSLLLMLLVGLLGCVIGYLL) traverse the membrane as a helical; Anchor for type IV membrane protein segment.

Belongs to the VAMP-associated protein (VAP) (TC 9.B.17) family.

The protein resides in the endoplasmic reticulum membrane. In terms of biological role, may play a role in vesicle trafficking. The sequence is that of Vesicle-associated protein 1-3 (PVA13) from Arabidopsis thaliana (Mouse-ear cress).